Consider the following 550-residue polypeptide: Leiomodin-2 (550 aa).

The segment at 1 to 47 (MSTFGYRRGLSKYESIDEDELLASLSPEELKELERELEDIEPDRNLP) is interaction with tropomyosin alpha. 3 interaction with actin regions span residues 1–165 (MSTF…TDNS), 166–500 (KPKT…KEIK), and 524–543 (VHEN…LRRV). A phosphoserine mark is found at serine 11, serine 15, and serine 24. The segment covering 84–94 (ERLGECGKVAE) has biased composition (basic and acidic residues). Disordered regions lie at residues 84–202 (ERLG…PCGN) and 359–527 (MDKQ…VHEN). Residues 91–147 (KVAEEDKEESEEELIFTESNSEVSEEVCTEDEEESQEEEEDSEEEEDSEEEEETTEA) are a coiled coil. 2 stretches are compositionally biased toward acidic residues: residues 95-105 (EDKEESEEELI) and 113-145 (VSEE…EETT). 2 stretches are compositionally biased toward polar residues: residues 151 to 164 (INGT…NTDN) and 170 to 193 (FKSQ…NSES). A compositionally biased stretch (basic and acidic residues) spans 359-377 (MDKQRQKRMQEQKQQEGHD). Residues 391 to 402 (TPGSSPYASPRQ) are compositionally biased toward polar residues. Phosphoserine is present on serine 407. The segment covering 421 to 452 (PPSPVAPPPPPPPPPLPPHMLPPPPPPPAPPL) has biased composition (pro residues). Positions 468–479 (QQESAQRALQNG) are enriched in polar residues. Residues 480–490 (QRKKKGKKVKK) are compositionally biased toward basic residues. The span at 497-515 (KEIKNSLRSVQEKKMEDSS) shows a compositional bias: basic and acidic residues. One can recognise a WH2 domain in the interval 524–543 (VHENLMEAIRGSSIRQLRRV).

It belongs to the tropomodulin family. In terms of assembly, can bind at least three actin monomers and thereby provides a nucleus for actin filament formation. Interacts (via N-terminus) with tropomyosin alpha (TPM1) (via N-terminus). May also interact with TPM2 (via N-terminus). Interacts with FLII. In terms of tissue distribution, detected in neonate heart (at protein level). Detected in embryonic heart and in pharyngeal arches. Detected in adult heart.

It localises to the cytoplasm. The protein resides in the myofibril. It is found in the sarcomere. Its subcellular location is the m line. The protein localises to the cytoskeleton. In terms of biological role, mediates nucleation of actin filaments and thereby promotes actin polymerization. Plays a role in the regulation of actin filament length. Required for normal sarcomere organization in the heart, and for normal heart function. The chain is Leiomodin-2 (Lmod2) from Mus musculus (Mouse).